A 331-amino-acid polypeptide reads, in one-letter code: Elongation factor Ts, mitochondrial (331 aa).

The segment at 254–295 (SPLTVGEMPEVREEEGEKKDGDKQDEEERSTDSDEDETQMLR) is disordered. The span at 262–275 (PEVREEEGEKKDGD) shows a compositional bias: basic and acidic residues. Residues 276-291 (KQDEEERSTDSDEDET) are compositionally biased toward acidic residues.

Belongs to the EF-Ts family.

It is found in the mitochondrion. Associates with the EF-Tu.GDP complex and induces the exchange of GDP to GTP. It remains bound to the aminoacyl-tRNA.EF-Tu.GTP complex up to the GTP hydrolysis stage on the ribosome. This is Elongation factor Ts, mitochondrial from Branchiostoma floridae (Florida lancelet).